We begin with the raw amino-acid sequence, 849 residues long: MAP7 domain-containing protein 1 (849 aa).

Disordered regions lie at residues 1–151 (MESG…REER) and 186–210 (EQRLKAEQRRAALEERQRQKLEKNK). Pro residues predominate over residues 24 to 41 (EPRPSPEGDPSPPPPPTP). Phosphothreonine occurs at positions 49 and 53. Serine 72 and serine 95 each carry phosphoserine. Threonine 99 bears the Phosphothreonine mark. 2 positions are modified to phosphoserine: serine 115 and serine 118. Threonine 120 carries the post-translational modification Phosphothreonine. Phosphoserine is present on residues serine 125 and serine 127. Residues 132 to 151 (QDVKKAGERHKLAKERREER) show a composition bias toward basic and acidic residues. Residues 167 to 223 (EKAKALREKQLQERRRRLEEQRLKAEQRRAALEERQRQKLEKNKERYEAAIQRSVKK) adopt a coiled-coil conformation. Phosphoserine is present on residues serine 256, serine 275, serine 315, serine 368, and serine 401. Residues 318-815 (TLPRNGRDQG…GFPAKGTAGD (498 aa)) are disordered. The segment covering 407 to 437 (RRLEATPVQKKEKKDKERENEKEKSALARER) has biased composition (basic and acidic residues). 4 positions are modified to phosphoserine: serine 444, serine 448, serine 454, and serine 460. Polar residues predominate over residues 457 to 474 (AELSTKSKARPTSPSTTW). Lysine 462 is covalently cross-linked (Glycyl lysine isopeptide (Lys-Gly) (interchain with G-Cter in SUMO2)). Residues serine 479 and serine 496 each carry the phosphoserine modification. Over residues 479–497 (SPCPSPGPGHTLPPKPPSP) the composition is skewed to pro residues. The span at 523–539 (PEDKNHSKSRTAEEKEP) shows a compositional bias: basic and acidic residues. Positions 542 to 556 (PASPAPSPVPSPTPA) are enriched in pro residues. A phosphoserine mark is found at serine 544, serine 548, and serine 552. Position 554 is a phosphothreonine (threonine 554). Residues 568–582 (PPDTAVPAVPTVPTF) show a composition bias toward low complexity. Positions 602-724 (TTDREEATRL…QERRKRLEEI (123 aa)) form a coiled coil. Residues 603-743 (TDREEATRLL…AETKKQDGKE (141 aa)) are compositionally biased toward basic and acidic residues.

Belongs to the MAP7 family.

The protein localises to the cytoplasm. Its subcellular location is the cytoskeleton. It is found in the spindle. The protein resides in the microtubule organizing center. It localises to the centrosome. The protein localises to the midbody. Its function is as follows. Microtubule-stabilizing protein involved in the control of cell motility and neurite outgrowth. Facilitate microtubule stabilization through the maintenance of acetylated stable microtubules. The protein is MAP7 domain-containing protein 1 (Map7d1) of Rattus norvegicus (Rat).